Reading from the N-terminus, the 511-residue chain is Maturase K (511 aa).

It belongs to the intron maturase 2 family. MatK subfamily.

It is found in the plastid. It localises to the chloroplast. Its function is as follows. Usually encoded in the trnK tRNA gene intron. Probably assists in splicing its own and other chloroplast group II introns. The polypeptide is Maturase K (Brachypodium distachyon (Purple false brome)).